The primary structure comprises 308 residues: Ribosomal RNA large subunit methyltransferase F (308 aa).

Belongs to the methyltransferase superfamily. METTL16/RlmF family.

The protein localises to the cytoplasm. The catalysed reaction is adenosine(1618) in 23S rRNA + S-adenosyl-L-methionine = N(6)-methyladenosine(1618) in 23S rRNA + S-adenosyl-L-homocysteine + H(+). Its function is as follows. Specifically methylates the adenine in position 1618 of 23S rRNA. This Shigella dysenteriae serotype 1 (strain Sd197) protein is Ribosomal RNA large subunit methyltransferase F.